The sequence spans 121 residues: Large ribosomal subunit protein bL20 (121 aa).

It belongs to the bacterial ribosomal protein bL20 family.

In terms of biological role, binds directly to 23S ribosomal RNA and is necessary for the in vitro assembly process of the 50S ribosomal subunit. It is not involved in the protein synthesizing functions of that subunit. The chain is Large ribosomal subunit protein bL20 from Beijerinckia indica subsp. indica (strain ATCC 9039 / DSM 1715 / NCIMB 8712).